Here is a 670-residue protein sequence, read N- to C-terminus: Transcription factor Ken 2 (670 aa).

A BTB domain is found at 108-176 (TDLLLICDGK…LYSGQVYVRS (69 aa)). Disordered stretches follow at residues 200–288 (SDGS…DRDR) and 307–470 (NNHP…SDDA). A compositionally biased stretch (polar residues) spans 218–230 (NRNTEGITGSSVV). A compositionally biased stretch (basic residues) spans 325-338 (HHLHHHHHHHHRQL). Composition is skewed to gly residues over residues 351-368 (GGGS…GESG) and 389-400 (SGGGGAGSGRRS). Over residues 407–419 (EPAEDDEDYELDV) the composition is skewed to acidic residues. The span at 451–464 (SDPVNLSIVKQQQD) shows a compositional bias: polar residues. A C2H2-type 1; degenerate zinc finger spans residues 586–594 (NLKTHLRVH). 2 consecutive C2H2-type zinc fingers follow at residues 600–623 (FACR…CSVH) and 636–658 (YTCC…LSGH).

It localises to the nucleus. In terms of biological role, transcription factor required for terminalia development. Negative regulator of the JAK/STAT pathway: represses JAK/STAT-dependent expression of ventral veins lacking (vvl) in the posterior spiracles. The polypeptide is Transcription factor Ken 2 (Culex quinquefasciatus (Southern house mosquito)).